We begin with the raw amino-acid sequence, 80 residues long: MAQKSLANNSINLPYKDLTSEVTRRRVTMITRKEIITQKSDEAKEMLSHLDLEQAPPPHRTYLTVPPAPPPSPAEDPTVS.

The tract at residues 53–80 (EQAPPPHRTYLTVPPAPPPSPAEDPTVS) is disordered.

This chain is Myocilin opposite strand protein, found in Homo sapiens (Human).